A 118-amino-acid chain; its full sequence is Nucleoid-associated protein TM_0687 (118 aa).

Belongs to the YbaB/EbfC family. Homodimer.

The protein resides in the cytoplasm. It is found in the nucleoid. Functionally, binds to DNA and alters its conformation. May be involved in regulation of gene expression, nucleoid organization and DNA protection. In Thermotoga maritima (strain ATCC 43589 / DSM 3109 / JCM 10099 / NBRC 100826 / MSB8), this protein is Nucleoid-associated protein TM_0687.